We begin with the raw amino-acid sequence, 507 residues long: Glutamate--tRNA ligase (507 aa).

The short motif at 14 to 24 is the 'HIGH' region element; sequence PSPTGYLHIGG. The 'KMSKS' region signature appears at 261 to 265; sequence KLSKR. ATP is bound at residue Lys-264.

The protein belongs to the class-I aminoacyl-tRNA synthetase family. Glutamate--tRNA ligase type 1 subfamily. As to quaternary structure, monomer.

The protein resides in the cytoplasm. It catalyses the reaction tRNA(Glu) + L-glutamate + ATP = L-glutamyl-tRNA(Glu) + AMP + diphosphate. In terms of biological role, catalyzes the attachment of glutamate to tRNA(Glu) in a two-step reaction: glutamate is first activated by ATP to form Glu-AMP and then transferred to the acceptor end of tRNA(Glu). In Roseiflexus castenholzii (strain DSM 13941 / HLO8), this protein is Glutamate--tRNA ligase.